Here is a 370-residue protein sequence, read N- to C-terminus: 3-dehydroquinate synthase (370 aa).

Residues 108-112 (GVIGD), 132-133 (TT), Lys-145, and Lys-154 each bind NAD(+). Glu-187, His-249, and His-267 together coordinate Zn(2+).

The protein belongs to the sugar phosphate cyclases superfamily. Dehydroquinate synthase family. Co(2+) serves as cofactor. Zn(2+) is required as a cofactor. The cofactor is NAD(+).

It localises to the cytoplasm. The catalysed reaction is 7-phospho-2-dehydro-3-deoxy-D-arabino-heptonate = 3-dehydroquinate + phosphate. It participates in metabolic intermediate biosynthesis; chorismate biosynthesis; chorismate from D-erythrose 4-phosphate and phosphoenolpyruvate: step 2/7. Functionally, catalyzes the conversion of 3-deoxy-D-arabino-heptulosonate 7-phosphate (DAHP) to dehydroquinate (DHQ). The protein is 3-dehydroquinate synthase of Cereibacter sphaeroides (strain KD131 / KCTC 12085) (Rhodobacter sphaeroides).